The primary structure comprises 1892 residues: Sodium channel protein type 4 subunit alpha A (1892 aa).

The Cytoplasmic portion of the chain corresponds to 1–125 (MATILPPPGT…RGAIKILIHS (125 aa)). Residues 34–54 (APKAGAHEEEEPPTPNPDLEA) are disordered. The I repeat unit spans residues 107-433 (ILSPFSLVRR…VVAMAYDEQN (327 aa)). A helical transmembrane segment spans residues 126-144 (LFSTLIMITILSNCVFMTM). The Extracellular segment spans residues 145-151 (SNPPAWS). A helical transmembrane segment spans residues 152 to 172 (KTVEYVFTGIYTFEATVKVLS). The Cytoplasmic portion of the chain corresponds to 173 to 186 (RGFCVGPFTFLRDP). Residues 187–204 (WNWLDFMVISMAYITEFV) form a helical membrane-spanning segment. Over 205 to 210 (DLGNVS) the chain is Extracellular. Asn-208 carries an N-linked (GlcNAc...) asparagine glycan. Residues 211–227 (ALRTFRVLRALKTITVI) form a helical membrane-spanning segment. Over 228-246 (PGLKTIVAALIQSVKKMVD) the chain is Cytoplasmic. Residues 247-266 (VMILTVFALAVFALVGLQLF) traverse the membrane as a helical segment. The Extracellular segment spans residues 267 to 370 (MGNLRHKCIR…PNYGYTSFDS (104 aa)). Cys-274 and Cys-339 are oxidised to a cystine. Asn-281, Asn-294, and Asn-341 each carry an N-linked (GlcNAc...) asparagine glycan. Cys-348 and Cys-354 are oxidised to a cystine. The pore-forming intramembrane region spans 371–395 (FGWAFLALFRLMTQDNWESLFQLTL). Topologically, residues 396–402 (RAAGQTY) are extracellular. Residues 403-423 (MLFFVVVIFLGSFYLINLILA) form a helical membrane-spanning segment. Residues 424-612 (VVAMAYDEQN…KWVHFVVMDP (189 aa)) lie on the Cytoplasmic side of the membrane. An II repeat occupies 594 to 866 (CCEKWVVFKK…QIAIGRITRG (273 aa)). The helical transmembrane segment at 613-631 (FVDLAITICIVLNTLFMAM) threads the bilayer. The Extracellular segment spans residues 632–642 (EHYPMTEEFDY). Residues 643-662 (MLSVGNLVFTGIFAAEMFFK) traverse the membrane as a helical segment. Residues 663 to 676 (LIAMDPYYYFQVGW) are Cytoplasmic-facing. A helical membrane pass occupies residues 677 to 696 (NIFDSIIVTLSLVELGLANV). The Extracellular portion of the chain corresponds to 697–698 (QG). Residues 699–716 (LSVLRSFRLLRVFKLAKS) traverse the membrane as a helical segment. Residues 717–732 (WPTLNMLIKIIGNSVG) lie on the Cytoplasmic side of the membrane. A helical transmembrane segment spans residues 733–751 (ALGNLTLVLAIIVFIFAVV). Residues 752–780 (GMQLFGKSYKDCVCKISSDCELPRWHMND) are Extracellular-facing. Cys-765 and Cys-771 are oxidised to a cystine. The segment at residues 781-801 (FFHSFLIVFRILCGEWIETMW) is an intramembrane region (pore-forming). Topologically, residues 802-812 (DCMEVAGAGMC) are extracellular. Cysteines 803 and 812 form a disulfide. Residues 813–831 (LVVFMMVMVIGNLVVLNLF) form a helical membrane-spanning segment. Topologically, residues 832–1071 (LALLLSSFSG…TCFTIVEHDW (240 aa)) are cytoplasmic. Disordered stretches follow at residues 884 to 905 (REPQKPAEEDPADEGEGKTEGM) and 945 to 982 (LGESDSENPSEDDDDQEDDVDSEVTCEENEHHSDGVED). A compositionally biased stretch (acidic residues) spans 948–971 (SDSENPSEDDDDQEDDVDSEVTCE). Residues 1052–1366 (KGKKWWNLRK…KKYYEAMKKL (315 aa)) form an III repeat. Residues 1072–1089 (FETFIIFMILLSSGALAF) traverse the membrane as a helical segment. Over 1090–1102 (EDIYIERRRTVKI) the chain is Extracellular. A helical membrane pass occupies residues 1103 to 1121 (VLEFADKVFTFIFVIEMLL). Topologically, residues 1122–1135 (KWVAYGFKTYFTNA) are cytoplasmic. A helical transmembrane segment spans residues 1136-1154 (WCWLDFFIVDISLISLSAN). Residues 1155 to 1162 (LMGFSDLG) lie on the Extracellular side of the membrane. The helical transmembrane segment at 1163 to 1181 (PIKSLRTLRALRPLRALSR) threads the bilayer. Residues 1182 to 1198 (FEGMRVVVNALIGAIPS) lie on the Cytoplasmic side of the membrane. A helical membrane pass occupies residues 1199 to 1218 (IFNVLLVCLIFWLIFSIMGV). Residues 1219-1270 (NLFAGKFYRCINTTTAELFPISVVNNKSDCVALQEATQEARWVNVKVNYDNV) lie on the Extracellular side of the membrane. Cys-1228 and Cys-1248 form a disulfide bridge. 2 N-linked (GlcNAc...) asparagine glycosylation sites follow: Asn-1230 and Asn-1244. The segment at residues 1271–1292 (AKGYLSLLQIATFKGWMDIMYP) is an intramembrane region (pore-forming). The Extracellular segment spans residues 1293 to 1309 (AVDSREVEEQPSYEINL). Residues 1310–1331 (YMYIYFVIFIIFGSFFTLNLFI) traverse the membrane as a helical segment. Topologically, residues 1332-1394 (GVIIDNFNQQ…LVFDFISQQF (63 aa)) are cytoplasmic. The segment at 1350 to 1352 (IFM) is important for rapid channel inactivation. Residues 1375–1673 (IPRPANLIQG…WEKFDTGGTQ (299 aa)) form an IV repeat. A helical transmembrane segment spans residues 1395–1412 (FDIFIMVLICLNMVTMMV). The Extracellular portion of the chain corresponds to 1413–1423 (ETDDQSPAKED). A helical membrane pass occupies residues 1424-1442 (FLFKVNVAFIVVFTGECTL). Residues 1443-1454 (KLFALRHYFFTN) are Cytoplasmic-facing. Residues 1455-1472 (GWNIFDFIVVILSIAGTM) traverse the membrane as a helical segment. Residues 1473-1485 (LSDIIEKYFVSPT) are Extracellular-facing. The helical transmembrane segment at 1486–1502 (LFRVIRLARIGRILRLI) threads the bilayer. Residues 1503 to 1521 (KGARGIRTLLFALMMSLPA) are Cytoplasmic-facing. Residues 1522-1539 (LFNIGLLLFLIMFIFSIF) traverse the membrane as a helical segment. The Extracellular segment spans residues 1540 to 1561 (GMSNFAYVKKEAGINDMFNFET). Residues 1562–1584 (FGSSIICLFQITTSAGWDTLLLP) constitute an intramembrane region (pore-forming). The Extracellular segment spans residues 1585–1614 (MLNKEPPDCDPAFENPGTDVKGNCGNPMMG). Cys-1593 and Cys-1608 are joined by a disulfide. Residues 1615 to 1637 (MVFFCSYIIISFLVVVNMYIAII) traverse the membrane as a helical segment. Residues 1638-1892 (LENFNVAQEE…TQTILRETNV (255 aa)) lie on the Cytoplasmic side of the membrane. In terms of domain architecture, IQ spans 1767–1796 (EDMAAVVIQRAYRNHLHKRGIHHAAYIQRS). A disordered region spans residues 1836 to 1856 (RRRPDPQTRCSGARCSPEPPE).

Belongs to the sodium channel (TC 1.A.1.10) family. Nav1.4/SCN4A subfamily. In terms of assembly, voltage-gated sodium (Nav) channels consist of an ion-conducting alpha subunit which is functional on its own associated with regulatory beta subunits.

It localises to the cell membrane. It carries out the reaction Na(+)(in) = Na(+)(out). Functionally, pore-forming subunit of a voltage-gated sodium (Nav) channel that directly mediates the depolarizing phase of action potentials in excitable membranes. Navs, also called VGSCs (voltage-gated sodium channels) or VDSCs (voltage-dependent sodium channels), operate by switching between closed and open conformations depending on the voltage difference across the membrane. In the open conformation they allow Na(+) ions to selectively pass through the pore, along their electrochemical gradient. The influx of Na+ ions provokes membrane depolarization, initiating the propagation of electrical signals throughout cells and tissues. The protein is Sodium channel protein type 4 subunit alpha A (scn4aa) of Takifugu rubripes (Japanese pufferfish).